Reading from the N-terminus, the 409-residue chain is Cuticle-degrading serine protease (409 aa).

An N-terminal signal peptide occupies residues 1-21; it reads MLTNGLISLLAIAGLATNAFA. A propeptide spanning residues 22 to 123 is cleaved from the precursor; it reads GPIRKVSNAG…VEQDTVVTTY (102 aa). One can recognise an Inhibitor I9 domain in the interval 39–122; it reads KYIVVLKKGL…YVEQDTVVTT (84 aa). In terms of domain architecture, Peptidase S8 spans 130–409; that stretch reads TWGLDRISHE…PNKIAYNGYA (280 aa). Asp164 acts as the Charge relay system in catalysis. Asn178 is a glycosylation site (N-linked (GlcNAc...) asparagine). Residue His200 is the Charge relay system of the active site. Residue Asn252 is glycosylated (N-linked (GlcNAc...) asparagine). Ser353 functions as the Charge relay system in the catalytic mechanism.

It belongs to the peptidase S8 family.

It localises to the secreted. Its activity is regulated as follows. Inhibited by PMSF, SSI, the peptide Phe-Val and by Phe, but not by EDTA. In terms of biological role, hydrolyzes gelatin, casein, the chromogenic substrate azocoll and the cuticle of the nematode P.redivivus. Immobilizes P.redivivus. The polypeptide is Cuticle-degrading serine protease (Arthrobotrys oligospora (strain ATCC 24927 / CBS 115.81 / DSM 1491) (Nematode-trapping fungus)).